Here is a 447-residue protein sequence, read N- to C-terminus: F-box only protein 5 (447 aa).

Residues S94 and S102 each carry the phosphoserine modification. Residues 135–244 are interaction with EVI5; it reads ALETSRLYED…IGRKMGLECV (110 aa). Positions 250 to 296 constitute an F-box domain; it reads LFRRGLRHVLATILAQLSDMDLINVSKVSTTWKKILEDDKGAFQLYS. Positions 261-339 are sufficient for interaction with RPS6KA2; Prevents association of CDC20 with RPS6KA2; that stretch reads TILAQLSDMD…KSAAQTSLKK (79 aa). The requires for efficient binding to CDC20 stretch occupies residues 261–409; that stretch reads TILAQLSDMD…GCGFDYCTKC (149 aa). An inhibits APC ubiquitin ligase activity region spans residues 305-447; that stretch reads NNNKFSPHAS…KKSKKNLRRL (143 aa). A competitively blocks access of APC substrates to the D-box coreceptor formed by FZR1 and ANAPC10 region spans residues 322–325; sequence RTPL. The disordered stretch occupies residues 337–358; that stretch reads LKKDAQTKLSNQGDQKGSTYSR. Polar residues predominate over residues 343 to 357; the sequence is TKLSNQGDQKGSTYS. Residues 374–422 form a ZBR-type zinc finger; that stretch reads SLKACIRCNSPAKYDCYLQRATCKREGCGFDYCTKCLCNYHTTKDCSDG. The Zn(2+) site is built by C378, C381, C396, C401, C406, C409, H414, and C419. Residues 378-420 form an allows a rapid multiple mono-ubiquitination of the APC substrate, but strongly inhibits the slow ubiquitin chain elongation catalyzed by UBCH10 region; the sequence is CIRCNSPAKYDCYLQRATCKREGCGFDYCTKCLCNYHTTKDCS. A sufficient to suppress UBE2S activity; essential for interaction with UBE2S; competitively inhibits the rapide ubiquitin chain elongation by UBE2D1 which blocks UBE2D1 with APC; indispensable for recruitment and position of FBXO5 to the catalytic site of APC; abrogates the inhibition of ubiquitin chain assembly primarily catalyzed by UBE2S; inhibits the ubiquitination by either UBE2C or UBE2D1 region spans residues 437-447; the sequence is TKKSKKNLRRL.

Part of a SCF (SKP1-cullin-F-box) protein ligase complex. Interacts with BTRC; mediates proteolysis by the SCF ubiquitin ligase complex leading to activation of APC in late mitosis and subsequent mitotic progression. Interacts with FZR1/CDH1 and the N-terminal substrate-binding domain of CDC20; prevents APC activation. Also interacts with EVI5 which blocks its phosphorylation by PLK1 and prevents its subsequent binding to BTRC and degradation. Interacts simultaneously with anaphase promoting complex (APC), through at least ANAPC2, CDC23, CDC27, the APC substrate GMNN and the APC activator FZR1. Interacts with UBE2S; interferes with the activity of UBE2S mainly by disrupting the dynamic electrostatic association between the C-terminal tail of UBE2S and ANAPC2. Interacts with RPS6KA2; cooperates to induce the metaphase arrest of early blastomeres; increases and stabilizes interaction of FBXO5 with CDC20. Post-translationally, phosphorylation by CDK2 and subsequently by PLK1 triggers degradation during early mitosis through ubiquitin-mediated proteolysis by the SCF ubiquitin ligase complex containing the F-box protein BTRC. This degradation is necessary for the activation of APC in late mitosis and subsequent mitotic progression. Phosphorylated by RPS6KA2; increases and stabilizes interaction with CDC20. In terms of processing, ubiquitinated by the SCF(BTRC) complex following phosphorylation by PLK1. Undergoes both 'Lys-11' and 'Lys-48'-linked polyubiquitination by APC-FZR1 complex leading to degradation by proteasome during G1 phase. Degraded through the SCF(BTRC) complex; degradation occurs during oocyte maturation, between germinal vesicle breakdown (GVBD) and meiosis I, and is required for the meiosis I-meiosis II transition.

It localises to the nucleus. The protein resides in the cytoplasm. Its subcellular location is the cytoskeleton. The protein localises to the spindle. Its pathway is protein modification; protein ubiquitination. Functionally, regulator of APC activity during mitotic and meiotic cell cycle. During mitotic cell cycle plays a role as both substrate and inhibitor of APC-FZR1 complex. During G1 phase, plays a role as substrate of APC-FZR1 complex E3 ligase. Then switches as an inhibitor of APC-FZR1 complex during S and G2 leading to cell-cycle commitment. As APC inhibitor, prevents the degradation of APC substrates at multiple levels: by interacting with APC and blocking access of APC substrates to the D-box coreceptor, formed by FZR1 and ANAPC10; by suppressing ubiquitin ligation and chain elongation by APC by preventing the UBE2C and UBE2S activities. Plays a role in genome integrity preservation by coordinating DNA replication with mitosis through APC inhibition in interphase to stabilize CCNA2 and GMNN in order to promote mitosis and prevent rereplication and DNA damage-induced cellular senescence. During oocyte maturation, plays a role in meiosis through inactivation of APC-FZR1 complex. Inhibits APC through RPS6KA2 interaction that increases FBXO5 affiniy for CDC20 leading to the metaphase arrest of the second meiotic division before fertilization. Controls entry into the first meiotic division through inactivation of APC-FZR1 complex. Promotes migration and osteogenic differentiation of mesenchymal stem cells. The sequence is that of F-box only protein 5 from Homo sapiens (Human).